The sequence spans 637 residues: Cell division cycle-related protein res1/sct1 (637 aa).

The region spanning 6–112 (IHKITYSGVE…YSGSAFMPMS (107 aa)) is the HTH APSES-type domain. A DNA-binding region (H-T-H motif) is located at residues 37 to 58 (ATQILKIAELDKPRRTRILEKF). Residues 114–137 (FTPQSNRKPTEAYRRNSPVKKSFS) form a disordered region. ANK repeat units lie at residues 236–265 (DGHT…NVVA) and 357–386 (HGDT…SSSI).

As to quaternary structure, DSC1 contains cdc10 and sct1/res1.

Acts as a positive regulator of the mitotic cell cycle and as a negative regulator of sexual differentiation. May be involved in the transcriptional regulation of the cdc22 and cdt1 genes. Is an integral component of the DSC1-like complex. The chain is Cell division cycle-related protein res1/sct1 (res1) from Schizosaccharomyces pombe (strain 972 / ATCC 24843) (Fission yeast).